The sequence spans 326 residues: Probable fructokinase-4 (326 aa).

It belongs to the carbohydrate kinase PfkB family.

It carries out the reaction D-fructose + ATP = D-fructose 6-phosphate + ADP + H(+). Its pathway is glycan biosynthesis; starch biosynthesis. Functionally, may play an important role in maintaining the flux of carbon towards starch formation. The sequence is that of Probable fructokinase-4 from Arabidopsis thaliana (Mouse-ear cress).